The sequence spans 687 residues: Immune inhibitor A (687 aa).

The segment covering 1–12 (MKDAKADTKEKL) has biased composition (basic and acidic residues). Positions 1 to 25 (MKDAKADTKEKLNQPATGTPAATGP) form a signal peptide, or 32. Positions 1–43 (MKDAKADTKEKLNQPATGTPAATGPVKGGLNGKVPTSPAKQKA) are disordered. A propeptide spanning residues 26-40 (VKGGLNGKVPTSPAK) is cleaved from the precursor. His266 is a binding site for Zn(2+). Residue Glu267 is part of the active site. His270 contacts Zn(2+).

Belongs to the peptidase M6 family. Zn(2+) is required as a cofactor. Ca(2+) serves as cofactor.

Its subcellular location is the secreted. Neutral metalloprotease that is secreted to degrade antibacterial proteins produced by the insect host for its defense (attacins and cecropins). Probably degrades some unknown crucial protein(s) too, since it is toxic when injected to insect larvae. The chain is Immune inhibitor A (ina) from Bacillus thuringiensis subsp. alesti.